The sequence spans 289 residues: Prepilin leader peptidase/N-methyltransferase (289 aa).

Residues 13 to 33 (AFVLCALVLGLLVGSFLNVVI) traverse the membrane as a helical segment. Zn(2+)-binding residues include Cys72, Cys75, Cys97, and Cys100. The next 5 membrane-spanning stretches (helical) occupy residues 128 to 148 (FSWQ…MSMI), 159 to 179 (LVLP…FASL), 183 to 203 (LWGA…FKLV), 228 to 248 (VLPL…TVML), and 256 to 276 (GTPI…LLWG).

It belongs to the peptidase A24 family. Zn(2+) serves as cofactor.

The protein resides in the cell inner membrane. The catalysed reaction is Typically cleaves a -Gly-|-Phe- bond to release an N-terminal, basic peptide of 5-8 residues from type IV prepilin, and then N-methylates the new N-terminal amino group, the methyl donor being S-adenosyl-L-methionine.. Plays an essential role in type IV pili and type II pseudopili formation by proteolytically removing the leader sequence from substrate proteins and subsequently monomethylating the alpha-amino group of the newly exposed N-terminal phenylalanine. This is Prepilin leader peptidase/N-methyltransferase (pilD) from Stutzerimonas stutzeri (Pseudomonas stutzeri).